Reading from the N-terminus, the 576-residue chain is Peroxisomal targeting signal receptor (576 aa).

Residue C10 forms a Glycyl cysteine thioester (Cys-Gly) (interchain with G-Cter in ubiquitin) linkage. The amphipathic helix 1 (AH1) stretch occupies residues 11–33; it reads AAGSNPLAQFTKHTQHDTSLQQS. Residue K22 forms a Glycyl lysine isopeptide (Lys-Gly) (interchain with G-Cter in ubiquitin) linkage. The amphipathic helix 2 (AH2) stretch occupies residues 58 to 75; sequence RQQMDQFMQQQNNPAFNF. Short sequence motifs (wxxxF/Y motif) lie at residues 100–104 and 128–132; these read WNQEF and WAQDF. The segment at 176 to 195 is disordered; the sequence is AQMQQQNPAQAQTSEQSQTQ. The WxxxF/Y motif 3 signature appears at 196 to 200; that stretch reads WEDQF. The segment at 224–240 is amphipathic helix 4 (AH4); that stretch reads FEQVWDDIQVSYADVEL. The WxxxF/Y motif 4 motif lies at 249–253; the sequence is WEKDF. TPR repeat units lie at residues 278-311, 312-345, 346-383, 384-421, 422-455, 456-489, and 490-523; these read PDAY…DPKH, VDAW…DPTN, LAAL…IASR, ARSS…ASMD, ADVQ…EPDK, ALNW…NPNF, and VRAR…HEVE.

The protein belongs to the peroxisomal targeting signal receptor family. As to quaternary structure, interacts (via WxxxF/Y and LVxEF motifs) with PEX14; promoting translocation through the PEX13-PEX14 docking complex. Interacts with PEX8. A disulfide bond is created between Cys-10 and Cys-338 or Cys-444. Post-translationally, monoubiquitinated at Cys-10 by PEX2 during PEX5 passage through the retrotranslocation channel: monoubiquitination acts as a signal for PEX5 extraction and is required for proper export from peroxisomes and recycling. When PEX5 recycling is compromised, polyubiquitinated at Lys-22 by PEX10 during its passage through the retrotranslocation channel, leading to its degradation.

The protein localises to the peroxisome membrane. The protein resides in the cytoplasm. It is found in the cytosol. Its subcellular location is the peroxisome matrix. Receptor that mediates peroxisomal import of proteins containing a C-terminal PTS1-type tripeptide peroxisomal targeting signal (SKL-type). Binds to cargo proteins containing a PTS1 peroxisomal targeting signal in the cytosol, and translocates them into the peroxisome matrix by passing through the peroxisomal docking complex along with cargo proteins. PEX5 receptor is then retrotranslocated into the cytosol, leading to release of bound cargo in the peroxisome matrix, and reset for a subsequent peroxisome import cycle. Required for PEX7 ubiquitination. This is Peroxisomal targeting signal receptor from Komagataella phaffii (strain GS115 / ATCC 20864) (Yeast).